The following is a 615-amino-acid chain: Ectoine/glycine betaine/proline transporter EctP (615 aa).

The next 12 membrane-spanning stretches (helical) occupy residues 24–44, 62–82, 102–122, 156–176, 207–227, 240–260, 275–295, 329–349, 360–380, 417–437, 463–483, and 489–509; these read FIFS…IALG, LGWM…GIFA, IVWF…FWGV, FGIH…YFIY, LAIV…VLQI, VSWV…ISVA, IAMA…LTLL, WTVF…MFVA, FIGG…SIFG, LTGI…ITSI, WACT…SSGI, and VVII…FSLL. Disordered stretches follow at residues 524 to 562 and 589 to 615; these read TRQW…LEHD and PEEA…EYDI. 2 stretches are compositionally biased toward basic and acidic residues: residues 526-540 and 600-615; these read QWEK…EEHS and KIVE…EYDI.

This sequence belongs to the BCCT transporter (TC 2.A.15) family.

The protein resides in the cell membrane. Its function is as follows. Involved in the uptake of osmoprotectants. Can transport ectoine, proline and glycine betaine. Na(+) is probably the coupling ion. In Corynebacterium glutamicum (strain ATCC 13032 / DSM 20300 / JCM 1318 / BCRC 11384 / CCUG 27702 / LMG 3730 / NBRC 12168 / NCIMB 10025 / NRRL B-2784 / 534), this protein is Ectoine/glycine betaine/proline transporter EctP.